Here is a 308-residue protein sequence, read N- to C-terminus: Probable manganese-dependent inorganic pyrophosphatase (308 aa).

Residues H9, D13, D15, D75, H97, and D149 each contribute to the Mn(2+) site.

This sequence belongs to the PPase class C family. Mn(2+) serves as cofactor.

Its subcellular location is the cytoplasm. The catalysed reaction is diphosphate + H2O = 2 phosphate + H(+). The polypeptide is Probable manganese-dependent inorganic pyrophosphatase (Listeria innocua serovar 6a (strain ATCC BAA-680 / CLIP 11262)).